A 134-amino-acid chain; its full sequence is Cytochrome b5 isoform E (134 aa).

The region spanning 5–81 is the Cytochrome b5 heme-binding domain; the sequence is RKVLSFEEVS…MDKYFIGEID (77 aa). Positions 40 and 64 each coordinate heme. A helical membrane pass occupies residues 107–127; the sequence is FIIKILQFLVPILILGLALVV. An AKR2A-binding sequence (ABS) required for endoplasmic reticulum membrane targeting motif is present at residues 128-134; the sequence is RHYTKKD.

This sequence belongs to the cytochrome b5 family. As to quaternary structure, interacts with CER1, BI-1, FAH1 and FAH2. Interacts with AKR2A. As to expression, expressed in roots, stems, leaves, flowers and siliques.

The protein resides in the cell membrane. The protein localises to the endoplasmic reticulum membrane. In terms of biological role, membrane bound hemoprotein which function as an electron carrier for several membrane bound oxygenases, including fatty acid desaturases. The chain is Cytochrome b5 isoform E (CYTB5-E) from Arabidopsis thaliana (Mouse-ear cress).